Here is a 29-residue protein sequence, read N- to C-terminus: Cliotide T18 (29 aa).

Positions 1–29 (GLPICGETCFTGTCYTPGCTCSYPVCKKN) form a cross-link, cyclopeptide (Gly-Asn). Intrachain disulfides connect C5–C19, C9–C21, and C14–C26.

Post-translationally, contains 3 disulfide bonds. In terms of processing, this is a cyclic peptide. In terms of tissue distribution, expressed in root nodules but not in seed.

Its function is as follows. Probably participates in a plant defense mechanism. The protein is Cliotide T18 of Clitoria ternatea (Butterfly pea).